Consider the following 522-residue polypeptide: Protein nucleotidyltransferase YdiU (522 aa).

ATP is bound by residues Gly-101, Gly-103, Arg-104, Lys-123, Asp-135, Gly-136, Arg-193, and Arg-200. Asp-270 serves as the catalytic Proton acceptor. The Mg(2+) site is built by Asn-271 and Asp-280. Asp-280 contacts ATP.

Belongs to the SELO family. Mg(2+) serves as cofactor. Mn(2+) is required as a cofactor.

The catalysed reaction is L-seryl-[protein] + ATP = 3-O-(5'-adenylyl)-L-seryl-[protein] + diphosphate. It carries out the reaction L-threonyl-[protein] + ATP = 3-O-(5'-adenylyl)-L-threonyl-[protein] + diphosphate. The enzyme catalyses L-tyrosyl-[protein] + ATP = O-(5'-adenylyl)-L-tyrosyl-[protein] + diphosphate. It catalyses the reaction L-histidyl-[protein] + UTP = N(tele)-(5'-uridylyl)-L-histidyl-[protein] + diphosphate. The catalysed reaction is L-seryl-[protein] + UTP = O-(5'-uridylyl)-L-seryl-[protein] + diphosphate. It carries out the reaction L-tyrosyl-[protein] + UTP = O-(5'-uridylyl)-L-tyrosyl-[protein] + diphosphate. Its function is as follows. Nucleotidyltransferase involved in the post-translational modification of proteins. It can catalyze the addition of adenosine monophosphate (AMP) or uridine monophosphate (UMP) to a protein, resulting in modifications known as AMPylation and UMPylation. This is Protein nucleotidyltransferase YdiU from Flavobacterium johnsoniae (strain ATCC 17061 / DSM 2064 / JCM 8514 / BCRC 14874 / CCUG 350202 / NBRC 14942 / NCIMB 11054 / UW101) (Cytophaga johnsonae).